Consider the following 96-residue polypeptide: NADH-quinone oxidoreductase subunit K (96 aa).

The next 3 helical transmembrane spans lie at 1–21 (MNYIVLAAIVFTIGAVGVLVR), 25–45 (IIVFMCVELMLNACNLAFVAF), and 56–76 (VIAFFVMVVAAAEVVVGLAII).

It belongs to the complex I subunit 4L family. In terms of assembly, NDH-1 is composed of 14 different subunits. Subunits NuoA, H, J, K, L, M, N constitute the membrane sector of the complex.

Its subcellular location is the cell membrane. It carries out the reaction a quinone + NADH + 5 H(+)(in) = a quinol + NAD(+) + 4 H(+)(out). Its function is as follows. NDH-1 shuttles electrons from NADH, via FMN and iron-sulfur (Fe-S) centers, to quinones in the respiratory chain. The immediate electron acceptor for the enzyme in this species is believed to be a menaquinone. Couples the redox reaction to proton translocation (for every two electrons transferred, four hydrogen ions are translocated across the cytoplasmic membrane), and thus conserves the redox energy in a proton gradient. This is NADH-quinone oxidoreductase subunit K from Thermobifida fusca (strain YX).